We begin with the raw amino-acid sequence, 963 residues long: Spliceosome associated factor 3, U4/U6 recycling protein (963 aa).

The span at Met-1 to Glu-11 shows a compositional bias: low complexity. Disordered stretches follow at residues Met-1 to Arg-36 and Lys-49 to Glu-86. At Ala-2 the chain carries N-acetylalanine. The tract at residues Ala-2–Ser-351 is mediates interaction with PRPF3. A phosphoserine mark is found at Ser-10 and Ser-16. Residues Ala-14–Asp-23 are compositionally biased toward basic and acidic residues. A coiled-coil region spans residues Lys-21 to Ala-46. Positions Gln-57–Glu-69 are enriched in acidic residues. Residues Glu-82 to Tyr-110 are a coiled coil. 8 HAT repeats span residues Gly-126–Ser-158, Leu-164–Gly-195, Gly-201–Ala-237, Ala-242–Asp-275, Gly-324–Arg-356, Lys-359–Arg-391, Val-394–Arg-430, and Asn-487–Ala-520. Ser-215 is subject to Phosphoserine. The interval Asn-487–Ala-520 is required for interaction with USP4. The necessary and sufficient for U6 snRNA binding stretch occupies residues Cys-537–Asn-953. A coiled-coil region spans residues Leu-559–Gly-619. The required for nuclear localization stretch occupies residues Gln-600–Cys-670. The Nuclear localization signal signature appears at Arg-601 to Lys-608. The span at Lys-608–Gly-619 shows a compositional bias: basic and acidic residues. The segment at Lys-608 to Pro-712 is disordered. Residues Pro-620–Asp-635 are compositionally biased toward basic residues. Acidic residues predominate over residues Arg-644–Thr-657. At Ser-650 the chain carries Phosphoserine. Phosphothreonine is present on Thr-657. Over residues Val-695 to Pro-712 the composition is skewed to basic and acidic residues. Residues Ile-704 to Asp-782 form the RRM 1 domain. A phosphoserine mark is found at Ser-769, Ser-795, and Ser-852. The 78-residue stretch at His-801–Pro-878 folds into the RRM 2 domain. Basic and acidic residues predominate over residues Pro-900–Gly-909. Arg-906 carries the post-translational modification Omega-N-methylarginine.

As to quaternary structure, component of the 7SK snRNP complex at least composed of P-TEFb (composed of CDK9 and CCNT1/cyclin-T1), HEXIM1, HEXIM2, BCDIN3, SART3 proteins and 7SK and U6 snRNAs. Interacts with AGO1 and AGO2. Interacts with PRPF3 and USP4; the interaction with PRPF3 is direct and recruits USP4 to its substrate PRPF3. Interacts with USP15; the interaction is direct.

It localises to the nucleus. Its subcellular location is the nucleoplasm. It is found in the cajal body. The protein resides in the nucleus speckle. The protein localises to the cytoplasm. In terms of biological role, U6 snRNP-binding protein that functions as a recycling factor of the splicing machinery. Promotes the initial reassembly of U4 and U6 snRNPs following their ejection from the spliceosome during its maturation. Also binds U6atac snRNPs and may function as a recycling factor for U4atac/U6atac spliceosomal snRNP, an initial step in the assembly of U12-type spliceosomal complex. The U12-type spliceosomal complex plays a role in the splicing of introns with non-canonical splice sites. May also function as a substrate-targeting factor for deubiquitinases like USP4 and USP15. Recruits USP4 to ubiquitinated PRPF3 within the U4/U5/U6 tri-snRNP complex, promoting PRPF3 deubiquitination and thereby regulating the spliceosome U4/U5/U6 tri-snRNP spliceosomal complex disassembly. May also recruit the deubiquitinase USP15 to histone H2B and mediate histone deubiquitination, thereby regulating gene expression and/or DNA repair. May play a role in hematopoiesis probably through transcription regulation of specific genes including MYC. The chain is Spliceosome associated factor 3, U4/U6 recycling protein from Pongo abelii (Sumatran orangutan).